The chain runs to 255 residues: Tablysin 15 (255 aa).

The first 23 residues, 1–23 (MTSIPVSSFLLAALVLQYATSDA), serve as a signal peptide directing secretion. Disulfide bonds link Cys-27-Cys-40, Cys-31-Cys-117, and Cys-49-Cys-110. Positions 32–34 (RGD) match the Cell attachment site motif. One can recognise an SCP domain in the interval 67 to 211 (LSKINDVRDH…KARALLTCNF (145 aa)). Leukotriene E4 contacts are provided by Trp-82, His-153, and Lys-156. Cystine bridges form between Cys-192–Cys-209 and Cys-232–Cys-243.

This sequence belongs to the CRISP family. Expressed in salivary glands.

Its subcellular location is the secreted. Anti-inflammatory scavenger of eicosanoids and antithrombotic protein that inhibits platelets aggregation induced by collagen, ADP and convulxin (GPVI agonist). Exhibits high affinity binding for glycoprotein IIb-IIIa receptor (ITGA2B/ITGB3) and endothelial cell alphaVbeta3 (ITGAV/ITGB3) integrins, but not for alpha-5/beta-1 or alpha-2/beta-1. Accordingly, it blocks endothelial cell adhesion to vitronectin (IC(50)~1 nM) and marginally to fibronectin (IC(50)~1 uM), but not to collagen. It also inhibits fibroblast growth factor (FGF)-induced endothelial cell proliferation, and attenuates tube formation in vitro. In addition, it dose-dependently attenuates thrombus formation to collagen under flow. Also binds proinflammatory cysteinyl leukotrienes (leukotrienes C4 (LTC4), D4 (LTD4) and E4 (LTE4)) with submicromolar affinities. The polypeptide is Tablysin 15 (Tabanus yao (Horsefly)).